The sequence spans 513 residues: ATP synthase subunit alpha (513 aa).

Position 169–176 (169–176 (GDRQIGKT)) interacts with ATP.

It belongs to the ATPase alpha/beta chains family. In terms of assembly, F-type ATPases have 2 components, CF(1) - the catalytic core - and CF(0) - the membrane proton channel. CF(1) has five subunits: alpha(3), beta(3), gamma(1), delta(1), epsilon(1). CF(0) has three main subunits: a(1), b(2) and c(9-12). The alpha and beta chains form an alternating ring which encloses part of the gamma chain. CF(1) is attached to CF(0) by a central stalk formed by the gamma and epsilon chains, while a peripheral stalk is formed by the delta and b chains.

It localises to the cell inner membrane. The enzyme catalyses ATP + H2O + 4 H(+)(in) = ADP + phosphate + 5 H(+)(out). Its function is as follows. Produces ATP from ADP in the presence of a proton gradient across the membrane. The alpha chain is a regulatory subunit. The chain is ATP synthase subunit alpha from Francisella tularensis subsp. tularensis (strain SCHU S4 / Schu 4).